The sequence spans 208 residues: MCSHGHSHNCAAEHIPEVPGDDVYRYDMVSYIDMEKVTTLNESVDGAGKKVFKVMEKRDDRLEYVESDCDHELLFNIPFTGHVRLTGLSIIGDEDGSHPAKIRLFKDREAMSFDDCSIEADQEIDLKQDPQGLVDYPLKASKFGNIHNLSILVDANFGEDETKIYYIGLRGEFQHEFRQRIAIATYESRAQLKDHKNEIPDAVAKGLF.

The region spanning 17–189 (EVPGDDVYRY…RIAIATYESR (173 aa)) is the PITH domain.

Belongs to the PITHD1 family.

This is PITH domain-containing protein ZK353.9 from Caenorhabditis elegans.